The chain runs to 70 residues: SPbeta prophage-derived uncharacterized HTH-type transcriptional regulator YopO (70 aa).

The region spanning 5 to 59 (IKQLMVKRGITIEELSRETMIDMQTLNKIIEMPDESDVTTIKLIALVLNVSIDEL) is the HTH cro/C1-type domain. A DNA-binding region (H-T-H motif) is located at residues 16-35 (IEELSRETMIDMQTLNKIIE).

This chain is SPbeta prophage-derived uncharacterized HTH-type transcriptional regulator YopO (yopO), found in Bacillus subtilis (strain 168).